A 379-amino-acid polypeptide reads, in one-letter code: Chaperone protein DnaJ (379 aa).

Residues 5-69 (EYYERLGVDK…QKRAAYDQYG (65 aa)) enclose the J domain. The CR-type zinc finger occupies 141–223 (GVEKQVKYNR…CHGSGHEKVA (83 aa)). 7 residues coordinate Zn(2+): Cys154, Cys157, Cys171, Cys174, Cys197, Cys200, and Cys214. 4 CXXCXGXG motif repeats span residues 154–161 (CHTCGGSG), 171–178 (CHKCGGRG), 197–204 (CDVCHGTG), and 211–218 (STTCHGSG).

This sequence belongs to the DnaJ family. Homodimer. The cofactor is Zn(2+).

It is found in the cytoplasm. In terms of biological role, participates actively in the response to hyperosmotic and heat shock by preventing the aggregation of stress-denatured proteins and by disaggregating proteins, also in an autonomous, DnaK-independent fashion. Unfolded proteins bind initially to DnaJ; upon interaction with the DnaJ-bound protein, DnaK hydrolyzes its bound ATP, resulting in the formation of a stable complex. GrpE releases ADP from DnaK; ATP binding to DnaK triggers the release of the substrate protein, thus completing the reaction cycle. Several rounds of ATP-dependent interactions between DnaJ, DnaK and GrpE are required for fully efficient folding. Also involved, together with DnaK and GrpE, in the DNA replication of plasmids through activation of initiation proteins. This is Chaperone protein DnaJ from Lactococcus lactis subsp. cremoris (Streptococcus cremoris).